Here is a 106-residue protein sequence, read N- to C-terminus: ATP-dependent Clp protease adapter protein ClpS (106 aa).

The protein belongs to the ClpS family. In terms of assembly, binds to the N-terminal domain of the chaperone ClpA.

Its function is as follows. Involved in the modulation of the specificity of the ClpAP-mediated ATP-dependent protein degradation. The polypeptide is ATP-dependent Clp protease adapter protein ClpS (Vibrio campbellii (strain ATCC BAA-1116)).